A 417-amino-acid polypeptide reads, in one-letter code: RH-like protein IIR (417 aa).

A run of 11 helical transmembrane segments spans residues cysteine 12 to threonine 32, leucine 44 to phenylalanine 64, valine 77 to phenylalanine 97, isoleucine 125 to valine 145, isoleucine 172 to proline 192, threonine 203 to phenylalanine 223, valine 238 to leucine 258, isoleucine 265 to cysteine 285, leucine 287 to glycine 307, asparagine 331 to threonine 351, and methionine 358 to leucine 378.

Belongs to the ammonium transporter (TC 2.A.49) family. Rh subfamily.

The protein resides in the membrane. May be part of an oligomeric complex which is likely to have a transport or channel function in the erythrocyte membrane. This chain is RH-like protein IIR, found in Pan troglodytes (Chimpanzee).